The sequence spans 248 residues: Probable transcriptional regulatory protein RHOS4_22610 (248 aa).

Positions 1–21 (MAGHSKWANIQHRKGKQDKLR) are disordered.

This sequence belongs to the TACO1 family.

The protein resides in the cytoplasm. The protein is Probable transcriptional regulatory protein RHOS4_22610 of Cereibacter sphaeroides (strain ATCC 17023 / DSM 158 / JCM 6121 / CCUG 31486 / LMG 2827 / NBRC 12203 / NCIMB 8253 / ATH 2.4.1.) (Rhodobacter sphaeroides).